The sequence spans 598 residues: Protein unc-93 homolog B1 (598 aa).

The interval 1–36 (MEVEPPLYPVAGAAGPQGDEDRHGVPDGPEAPLDEL) is disordered. The next 5 membrane-spanning stretches (helical) occupy residues 64–84 (VLAASTGVTLTYGVYLGLLQM), 110–130 (KMLMGINVTPIAALLYTPVLI), 132–152 (FFGTKWMMFLAVGIYALFVST), 160–180 (TLVPSAVALGMAIVPLWASMG), and 223–243 (IFYSFFHLSFACAQLPMIYFL). Asparagine 251 and asparagine 272 each carry an N-linked (GlcNAc...) asparagine glycan. 5 consecutive transmembrane segments (helical) span residues 285-305 (LIVVESVLMAVAFLAMLMVLG), 343-363 (LVPFFIYSGFEVLFACTGFAL), 378-398 (LLIAYSLGASASSVLGLLGLW), 403-423 (VPLVAGAGLHLLLTLSLFFWA), and 428-448 (VLQHSWIFYFVAALWGVGSAL). N-linked (GlcNAc...) asparagine glycosylation occurs at asparagine 449. Helical transmembrane passes span 469 to 489 (FIFTIYHWWQAVAIFVVYLGS) and 495 to 515 (AKLAVLLVTLVAAAASYLWME). The disordered stretch occupies residues 524–598 (PRQPRIPKPQ…ALGGDGPEEQ (75 aa)). Acidic residues predominate over residues 544 to 554 (EDNSDESDMEG). Serine 547 and serine 550 each carry phosphoserine.

Belongs to the unc-93 family. Interacts with TLR3, TLR5, TLR7, TLR8, TLR9 and TLR13 (probably via transmembrane domain). N-glycosylated.

Its subcellular location is the endoplasmic reticulum membrane. It localises to the endosome. The protein localises to the lysosome. It is found in the cytoplasmic vesicle. The protein resides in the phagosome. Plays an important role in innate and adaptive immunity by regulating nucleotide-sensing Toll-like receptor (TLR) signaling. Required for the transport of a subset of TLRs (including TLR3, TLR7 and TLR9) from the endoplasmic reticulum to endolysosomes where they can engage pathogen nucleotides and activate signaling cascades. May play a role in autoreactive B-cells removal. The polypeptide is Protein unc-93 homolog B1 (Mus musculus (Mouse)).